The sequence spans 577 residues: External alternative NAD(P)H-ubiquinone oxidoreductase B1, mitochondrial (577 aa).

The transit peptide at 1–35 directs the protein to the mitochondrion; that stretch reads MRGFTYLSKVLHSHSSYSKLLVLCSVSTGGLLVYA. Residue 57-87 coordinates FAD; sequence RVVVLGTGWGGTSFLKDVDISSYDVQVVSPR. 221-257 contacts NAD(+); sequence LHFVIVGGGPTGVEFAAELHDYVYEDLVKIYPSVKDF. The EF-hand domain occupies 378–413; it reads KVMEDISTIFEAADKDDSGTLSVEEFRDVLEDIIIR. Residues Asp-391, Asp-393, Ser-395, Thr-397, and Glu-402 each contribute to the Ca(2+) site. Positions 568–577 match the Microbody targeting signal motif; the sequence is YIFGRDSSRI.

This sequence belongs to the NADH dehydrogenase family. The cofactor is FAD.

The protein localises to the mitochondrion inner membrane. It localises to the peroxisome. The enzyme catalyses a quinone + NADH + H(+) = a quinol + NAD(+). The catalysed reaction is a ubiquinone + NADH + H(+) = a ubiquinol + NAD(+). With respect to regulation, activity is calcium-dependent with a more pronounced effect at higher pH. In terms of biological role, calcium-dependent NAD(P)H dehydrogenase. Binds calcium ions. Alternative NADH-ubiquinone oxidoreductase which catalyzes the oxidation of mitochondrial NADH does not translocate protons across the inner mitochondrial membrane. The chain is External alternative NAD(P)H-ubiquinone oxidoreductase B1, mitochondrial (NDB1) from Solanum tuberosum (Potato).